The following is a 117-amino-acid chain: Ribulose bisphosphate carboxylase small subunit 1 (117 aa).

This sequence belongs to the RuBisCO small chain family. As to quaternary structure, heterohexadecamer of 8 large and 8 small subunits.

Functionally, ruBisCO catalyzes two reactions: the carboxylation of D-ribulose 1,5-bisphosphate, the primary event in carbon dioxide fixation, as well as the oxidative fragmentation of the pentose substrate. Both reactions occur simultaneously and in competition at the same active site. Although the small subunit is not catalytic it is essential for maximal activity. In Hydrogenovibrio marinus, this protein is Ribulose bisphosphate carboxylase small subunit 1.